The sequence spans 324 residues: Proto-oncogene Mas (324 aa).

The Extracellular segment spans residues 1–35; the sequence is MDQSNMTSLAEEKAMNTSSRNASLGSSHPPIPIVH. N-linked (GlcNAc...) asparagine glycosylation is found at Asn5, Asn16, and Asn21. A helical transmembrane segment spans residues 36 to 60; the sequence is WVIMSISPLGFVENGILLWFLCFRM. The Cytoplasmic portion of the chain corresponds to 61–64; the sequence is RRNP. A helical transmembrane segment spans residues 65–86; it reads FTVYITHLSIADISLLFCIFIL. Residues 87-103 are Extracellular-facing; sequence SIDYALDYELSSGHHYT. A helical transmembrane segment spans residues 104 to 127; sequence IVTLSVTFLFGYNTGLYLLTAISV. Topologically, residues 128 to 148 are cytoplasmic; the sequence is ERCLSVLYPIWYRCHRPKHQS. A helical transmembrane segment spans residues 149 to 171; the sequence is AFVCALLWALSCLVTTMEYVMCI. At 172 to 184 the chain is on the extracellular side; the sequence is DSGEESHSRSDCR. The helical transmembrane segment at 185–205 threads the bilayer; the sequence is AVIIFIAILSFLVFTPLMLVS. Topologically, residues 206–223 are cytoplasmic; the sequence is STILVVKIRKNTWASHSS. A helical membrane pass occupies residues 224–244; that stretch reads KLYIVIMVTIIIFLIFAMPMR. Residues 245-262 lie on the Extracellular side of the membrane; it reads VLYLLYYEYWSAFGNLHN. The helical transmembrane segment at 263–283 threads the bilayer; the sequence is ISLLFSTINSSANPFIYFFVG. Residues 284–324 are Cytoplasmic-facing; the sequence is SSKKKRFRESLKVVLTRAFKDEMQPRRQEGNGNTVSIETVV.

This sequence belongs to the G-protein coupled receptor 1 family. In terms of assembly, interacts with AGTR1. Interacts with FLNA (via filamin repeat 21); increases PKA-mediated phosphorylation of FLNA.

It is found in the cell membrane. In terms of biological role, acts specifically as a functional antagonist of AGTR1 (angiotensin-2 type 1 receptor), although it up-regulates AGTR1 receptor levels. Positive regulation of AGTR1 levels occurs through activation of the G-proteins GNA11 and GNAQ, and stimulation of the protein kinase C signaling cascade. The antagonist effect on AGTR1 function is probably due to AGTR1 being physically altered by MAS1. Receptor for angiotensin 1-7. This Mus musculus (Mouse) protein is Proto-oncogene Mas (Mas1).